The following is a 460-amino-acid chain: tRNA modification GTPase MnmE (460 aa).

(6S)-5-formyl-5,6,7,8-tetrahydrofolate contacts are provided by Arg29, Glu91, and Arg131. The TrmE-type G domain maps to 226-383 (GLRVALVGRP…LVQAVLERCG (158 aa)). Residue Asn236 participates in K(+) binding. GTP is bound by residues 236 to 241 (NVGKSS), 255 to 261 (TDLPGTT), and 280 to 283 (DTAG). Ser240 lines the Mg(2+) pocket. Residues Thr255, Leu257, and Thr260 each coordinate K(+). Position 261 (Thr261) interacts with Mg(2+). Lys460 serves as a coordination point for (6S)-5-formyl-5,6,7,8-tetrahydrofolate.

This sequence belongs to the TRAFAC class TrmE-Era-EngA-EngB-Septin-like GTPase superfamily. TrmE GTPase family. As to quaternary structure, homodimer. Heterotetramer of two MnmE and two MnmG subunits. It depends on K(+) as a cofactor.

The protein resides in the cytoplasm. Exhibits a very high intrinsic GTPase hydrolysis rate. Involved in the addition of a carboxymethylaminomethyl (cmnm) group at the wobble position (U34) of certain tRNAs, forming tRNA-cmnm(5)s(2)U34. This chain is tRNA modification GTPase MnmE, found in Synechococcus sp. (strain WH7803).